We begin with the raw amino-acid sequence, 89 residues long: Putative regulatory protein CYA_2696 (89 aa).

The protein belongs to the RemA family.

This is Putative regulatory protein CYA_2696 from Synechococcus sp. (strain JA-3-3Ab) (Cyanobacteria bacterium Yellowstone A-Prime).